Here is a 547-residue protein sequence, read N- to C-terminus: Chaperonin GroEL (547 aa).

Residues 30–33, lysine 51, 87–91, glycine 415, and aspartate 496 contribute to the ATP site; these read TLGP and DGTTT.

This sequence belongs to the chaperonin (HSP60) family. In terms of assembly, forms a cylinder of 14 subunits composed of two heptameric rings stacked back-to-back. Interacts with the co-chaperonin GroES.

It localises to the cytoplasm. It carries out the reaction ATP + H2O + a folded polypeptide = ADP + phosphate + an unfolded polypeptide.. Its function is as follows. Together with its co-chaperonin GroES, plays an essential role in assisting protein folding. The GroEL-GroES system forms a nano-cage that allows encapsulation of the non-native substrate proteins and provides a physical environment optimized to promote and accelerate protein folding. The polypeptide is Chaperonin GroEL (Actinobacillus pleuropneumoniae serotype 7 (strain AP76)).